A 77-amino-acid chain; its full sequence is DNA-directed RNA polymerase subunit Rpo5 (77 aa).

The protein belongs to the archaeal Rpo5/eukaryotic RPB5 RNA polymerase subunit family. As to quaternary structure, part of the RNA polymerase complex.

It is found in the cytoplasm. The catalysed reaction is RNA(n) + a ribonucleoside 5'-triphosphate = RNA(n+1) + diphosphate. Its function is as follows. DNA-dependent RNA polymerase (RNAP) catalyzes the transcription of DNA into RNA using the four ribonucleoside triphosphates as substrates. In Methanosphaera stadtmanae (strain ATCC 43021 / DSM 3091 / JCM 11832 / MCB-3), this protein is DNA-directed RNA polymerase subunit Rpo5.